Reading from the N-terminus, the 729-residue chain is Solute carrier family 15 member 2 (729 aa).

A disordered region spans residues 1 to 35; that stretch reads MNPFQKNESKETLFSPVSTEEMLPRPPSPPKKSPP. Over 1 to 57 the chain is Cytoplasmic; sequence MNPFQKNESKETLFSPVSTEEMLPRPPSPPKKSPPKIFGSSYPVSIAFIVVNEFCER. Serine 9 is modified (phosphoserine). Threonine 12 bears the Phosphothreonine mark. Serine 28 is subject to Phosphoserine. A helical transmembrane segment spans residues 58-78; it reads FSYYGMKAVLTLYFLYFLHWN. Residues 79-87 are Extracellular-facing; sequence EDTSTSVYH. Residues 88-108 traverse the membrane as a helical segment; that stretch reads AFSSLCYFTPILGAAIADSWL. The Cytoplasmic portion of the chain corresponds to 109 to 113; it reads GKFKT. The helical transmembrane segment at 114 to 134 threads the bilayer; it reads IIYLSLVYVLGHVFKSLGAIP. Residues 135–139 lie on the Extracellular side of the membrane; the sequence is ILGGK. A helical membrane pass occupies residues 140–160; that stretch reads MLHTILSLVGLSLIALGTGGI. Residues 161 to 183 lie on the Cytoplasmic side of the membrane; it reads KPCVAAFGGDQFEEEHAEARTRY. Residues 184-204 traverse the membrane as a helical segment; the sequence is FSVFYLAINAGSLISTFITPM. The Extracellular portion of the chain corresponds to 205–217; the sequence is LRGDVKCFGQDCY. The chain crosses the membrane as a helical span at residues 218–238; the sequence is ALAFGVPGLLMVLALVVFAMG. The Cytoplasmic segment spans residues 239–295; the sequence is SKMYRKPPPEGNIVAQVIKCIWFALCNRFRNRSGDLPKRQHWLDWAAEKYPKHLIAD. A helical transmembrane segment spans residues 296–316; that stretch reads VKALTRVLFLYIPLPMFWALL. Residues 317–343 are Extracellular-facing; it reads DQQGSRWTLQANKMNGDLGFFVLQPDQ. Residues 344–364 traverse the membrane as a helical segment; the sequence is MQVLNPFLVLIFIPLFDLVIY. Topologically, residues 365–380 are cytoplasmic; that stretch reads RLISKCRINFSSLRKM. The helical transmembrane segment at 381-401 threads the bilayer; that stretch reads AVGMILACLAFAVAALVETKI. Residues 402-611 are Extracellular-facing; the sequence is NGMIHPQPAS…PVNKLSIAWQ (210 aa). The tract at residues 402–611 is extracellular domain (ECD); the sequence is NGMIHPQPAS…PVNKLSIAWQ (210 aa). N-linked (GlcNAc...) asparagine glycosylation is found at asparagine 435, asparagine 448, asparagine 528, and asparagine 587. A helical membrane pass occupies residues 612–632; it reads LPQYVLVTAAEVMFSVTGLEF. The Cytoplasmic segment spans residues 633-643; the sequence is SYSQAPSSMKS. A helical membrane pass occupies residues 644-664; that stretch reads VLQAAWLLTVAVGNIIVLVVA. The Extracellular portion of the chain corresponds to 665 to 674; the sequence is QFSGLAQWAE. The helical transmembrane segment at 675–695 threads the bilayer; it reads FVLFSCLLLVVCLIFSVMAYY. Residues 696-729 are Cytoplasmic-facing; sequence YVPLKSEDTREATDKQIPAVQGNMINLETKNTRL.

This sequence belongs to the major facilitator superfamily. Proton-dependent oligopeptide transporter (POT/PTR) (TC 2.A.17) family. In terms of assembly, interacts (via extracellular domain region) with trypsin. Strongly expressed in kidney cortex and medulla. Also detected in brain, lung and spleen. Expressed in choroid plexus.

It is found in the apical cell membrane. Its subcellular location is the cytoplasmic vesicle. The protein resides in the phagosome membrane. It localises to the cell membrane. The catalysed reaction is a dipeptide(out) + 2 H(+)(out) = a dipeptide(in) + 2 H(+)(in). It carries out the reaction glycyl-L-leucine(out) + 2 H(+)(out) = glycyl-L-leucine(in) + 2 H(+)(in). The enzyme catalyses glycyl-L-lysine(out) + 2 H(+)(out) = glycyl-L-lysine(in) + 2 H(+)(in). It catalyses the reaction glycyl-L-glutamate(out) + 3 H(+)(out) = glycyl-L-glutamate(in) + 3 H(+)(in). The catalysed reaction is L-alanyl-L-alanine(out) + 2 H(+)(out) = L-alanyl-L-alanine(in) + 2 H(+)(in). It carries out the reaction an L-amino acid tripeptide(out) + 2 H(+)(out) = an L-amino acid tripeptide(in) + 2 H(+)(in). The enzyme catalyses N-acetyl-D-muramoyl-L-alanyl-D-isoglutamine(out) + 3 H(+)(out) = N-acetyl-D-muramoyl-L-alanyl-D-isoglutamine(in) + 3 H(+)(in). It catalyses the reaction carnosine(out) + 2 H(+)(out) = carnosine(in) + 2 H(+)(in). In terms of biological role, proton-coupled amino-acid transporter that transports oligopeptides of 2 to 4 amino acids with a preference for dipeptides. Transports neutral and anionic dipeptides with a proton to peptide stoichiometry of 2:1 or 3:1. In kidney, involved in the absorption of circulating di- and tripeptides from the glomerular filtrate. Can also transport beta-lactam antibiotics, such as the aminocephalosporin cefadroxil, and other antiviral and anticancer drugs. Transports the dipeptide-like aminopeptidase inhibitor bestatin. Also able to transport carnosine. Involved in innate immunity by promoting the detection of microbial pathogens by NOD-like receptors (NLRs). Mediates transport of bacterial peptidoglycans across the plasma membrane or, in macrophages, the phagosome membrane: catalyzes the transport of certain bacterial peptidoglycans, such as muramyl dipeptide (MDP), the NOD2 ligand. This chain is Solute carrier family 15 member 2, found in Rattus norvegicus (Rat).